Here is a 368-residue protein sequence, read N- to C-terminus: Abasic site processing protein YMR114C (368 aa).

Catalysis depends on Cys-2, which acts as the Nucleophile. Position 2 is a thiazolidine linkage to a ring-opened DNA abasic site (Cys-2). The disordered stretch occupies residues 25-48 (VNTPKDASSNSQHPHDEEDTKDQP). Over residues 37–46 (HPHDEEDTKD) the composition is skewed to basic and acidic residues. The active site involves Glu-132. Residues 270 to 368 (LENDNEQGID…DSRGKKKIKK (99 aa)) form a disordered region. 3 stretches are compositionally biased toward basic and acidic residues: residues 281 to 296 (RGVK…DVFN), 304 to 313 (NSYDGLKKNE), and 326 to 349 (IGDR…EKRN). Position 338 is a phosphoserine (Ser-338).

Belongs to the SOS response-associated peptidase family.

The protein localises to the chromosome. Formation and reversal of DNA-protein cross-link depends on DNA context. Catalyzes formation of the thiazolidine linkage in presence of abasic sites in single-stranded DNA. Mediates the reversal of the thiazolidine cross-link in presence of double stranded DNA. Functionally, sensor of abasic sites in single-stranded DNA (ssDNA) required to preserve genome integrity by promoting error-free repair of abasic sites. Recognizes and binds abasic sites in ssDNA at replication forks and chemically modifies the lesion by forming a covalent cross-link with DNA: forms a stable thiazolidine linkage between a ring-opened abasic site and the alpha-amino and sulfhydryl substituents of its N-terminal catalytic cysteine residue. The DNA-protein cross-link is then reversed: able to catalyze the reversal of the thiazolidine cross-link and cycle between a cross-link and a non-cross-linked state depending on DNA context: mediates self-reversal of the thiazolidine cross-link in double stranded DNA. Acts as a protease: mediates autocatalytic processing of its N-terminal methionine in order to expose the catalytic cysteine. This is Abasic site processing protein YMR114C from Saccharomyces cerevisiae (strain ATCC 204508 / S288c) (Baker's yeast).